The primary structure comprises 313 residues: Homoserine O-succinyltransferase (313 aa).

The active-site Acyl-thioester intermediate is Cys-142. Substrate contacts are provided by Lys-163 and Ser-192. His-235 (proton acceptor) is an active-site residue. Glu-237 is a catalytic residue. Arg-249 contributes to the substrate binding site.

The protein belongs to the MetA family.

Its subcellular location is the cytoplasm. It carries out the reaction L-homoserine + succinyl-CoA = O-succinyl-L-homoserine + CoA. It participates in amino-acid biosynthesis; L-methionine biosynthesis via de novo pathway; O-succinyl-L-homoserine from L-homoserine: step 1/1. In terms of biological role, transfers a succinyl group from succinyl-CoA to L-homoserine, forming succinyl-L-homoserine. The chain is Homoserine O-succinyltransferase from Vibrio vulnificus (strain CMCP6).